A 399-amino-acid polypeptide reads, in one-letter code: Dual-specificity RNA methyltransferase RlmN (399 aa).

Glutamate 122 functions as the Proton acceptor in the catalytic mechanism. Residues 128-371 (ETDRGTLCVS…VRTPRGRDIL (244 aa)) form the Radical SAM core domain. A disulfide bridge connects residues cysteine 135 and cysteine 374. Residues cysteine 142, cysteine 146, and cysteine 149 each coordinate [4Fe-4S] cluster. S-adenosyl-L-methionine contacts are provided by residues 200-201 (GE), serine 232, 254-256 (SLH), and asparagine 331. The S-methylcysteine intermediate role is filled by cysteine 374.

The protein belongs to the radical SAM superfamily. RlmN family. Requires [4Fe-4S] cluster as cofactor.

Its subcellular location is the cytoplasm. It carries out the reaction adenosine(2503) in 23S rRNA + 2 reduced [2Fe-2S]-[ferredoxin] + 2 S-adenosyl-L-methionine = 2-methyladenosine(2503) in 23S rRNA + 5'-deoxyadenosine + L-methionine + 2 oxidized [2Fe-2S]-[ferredoxin] + S-adenosyl-L-homocysteine. It catalyses the reaction adenosine(37) in tRNA + 2 reduced [2Fe-2S]-[ferredoxin] + 2 S-adenosyl-L-methionine = 2-methyladenosine(37) in tRNA + 5'-deoxyadenosine + L-methionine + 2 oxidized [2Fe-2S]-[ferredoxin] + S-adenosyl-L-homocysteine. Functionally, specifically methylates position 2 of adenine 2503 in 23S rRNA and position 2 of adenine 37 in tRNAs. m2A2503 modification seems to play a crucial role in the proofreading step occurring at the peptidyl transferase center and thus would serve to optimize ribosomal fidelity. The chain is Dual-specificity RNA methyltransferase RlmN from Rhodopseudomonas palustris (strain TIE-1).